The chain runs to 570 residues: Sulfite reductase [NADPH] hemoprotein beta-component (570 aa).

C434, C440, C479, and C483 together coordinate [4Fe-4S] cluster. C483 is a binding site for siroheme.

This sequence belongs to the nitrite and sulfite reductase 4Fe-4S domain family. As to quaternary structure, alpha(8)-beta(8). The alpha component is a flavoprotein, the beta component is a hemoprotein. The cofactor is siroheme. [4Fe-4S] cluster is required as a cofactor.

It catalyses the reaction hydrogen sulfide + 3 NADP(+) + 3 H2O = sulfite + 3 NADPH + 4 H(+). It participates in sulfur metabolism; hydrogen sulfide biosynthesis; hydrogen sulfide from sulfite (NADPH route): step 1/1. Its function is as follows. Component of the sulfite reductase complex that catalyzes the 6-electron reduction of sulfite to sulfide. This is one of several activities required for the biosynthesis of L-cysteine from sulfate. The protein is Sulfite reductase [NADPH] hemoprotein beta-component of Salmonella agona (strain SL483).